The following is a 244-amino-acid chain: Orotidine 5'-phosphate decarboxylase (244 aa).

Substrate is bound by residues Asp-10, Lys-32, Asp-59–Thr-68, Thr-122, Arg-184, Gln-193, Gly-213, and Arg-214. Lys-61 serves as the catalytic Proton donor.

This sequence belongs to the OMP decarboxylase family. Type 1 subfamily. As to quaternary structure, homodimer.

The catalysed reaction is orotidine 5'-phosphate + H(+) = UMP + CO2. Its pathway is pyrimidine metabolism; UMP biosynthesis via de novo pathway; UMP from orotate: step 2/2. In terms of biological role, catalyzes the decarboxylation of orotidine 5'-monophosphate (OMP) to uridine 5'-monophosphate (UMP). The chain is Orotidine 5'-phosphate decarboxylase from Geobacillus kaustophilus (strain HTA426).